A 361-amino-acid polypeptide reads, in one-letter code: Histidinol-phosphate aminotransferase (361 aa).

Position 218 is an N6-(pyridoxal phosphate)lysine (Lys218).

This sequence belongs to the class-II pyridoxal-phosphate-dependent aminotransferase family. Histidinol-phosphate aminotransferase subfamily. As to quaternary structure, homodimer. It depends on pyridoxal 5'-phosphate as a cofactor.

The enzyme catalyses L-histidinol phosphate + 2-oxoglutarate = 3-(imidazol-4-yl)-2-oxopropyl phosphate + L-glutamate. It functions in the pathway amino-acid biosynthesis; L-histidine biosynthesis; L-histidine from 5-phospho-alpha-D-ribose 1-diphosphate: step 7/9. This chain is Histidinol-phosphate aminotransferase, found in Ruegeria pomeroyi (strain ATCC 700808 / DSM 15171 / DSS-3) (Silicibacter pomeroyi).